Reading from the N-terminus, the 407-residue chain is MKRAFIMVLDSFGIGATADADRFGDVGSDTLGHIAEACAKGEADNGRKGPLNLPNLTRLGLVKAHEGSTGKIAAGMDGNADVIGAYAWAHELSSGKDTPSGHWEIAGVPVLFDWGYFSDHENSFPQELLDKLVKRANLPGYLGNCHSSGTVILDQLGEEHMKTGKPIFYTSADSVFQIACHEETFGLDKLYELCEIAREELTEGGYNIGRVIARPFIGDKAGNFQRTGNRHDLAVEPPAPTVLQKLVDEKQGHVVSVGKIADIYANCGITKKVKATGLDALFDATLKEMKEAGDKTIVFTNFVDFDSSWGHRRDIAGYAAGLELFDRRLPELMELVGEDDILILTADHGCDPSWTGTDHTREHIPVLIYGPKVKPGSLGHRETFADIGQTLATYFGTSPMDYGKNML.

Mn(2+) contacts are provided by D10, D306, H311, D347, H348, and H359.

Belongs to the phosphopentomutase family. Mn(2+) serves as cofactor.

Its subcellular location is the cytoplasm. It carries out the reaction 2-deoxy-alpha-D-ribose 1-phosphate = 2-deoxy-D-ribose 5-phosphate. The enzyme catalyses alpha-D-ribose 1-phosphate = D-ribose 5-phosphate. The protein operates within carbohydrate degradation; 2-deoxy-D-ribose 1-phosphate degradation; D-glyceraldehyde 3-phosphate and acetaldehyde from 2-deoxy-alpha-D-ribose 1-phosphate: step 1/2. Functionally, isomerase that catalyzes the conversion of deoxy-ribose 1-phosphate (dRib-1-P) and ribose 1-phosphate (Rib-1-P) to deoxy-ribose 5-phosphate (dRib-5-P) and ribose 5-phosphate (Rib-5-P), respectively. This chain is Phosphopentomutase, found in Salmonella gallinarum (strain 287/91 / NCTC 13346).